We begin with the raw amino-acid sequence, 885 residues long: Ankyrin repeat and SAM domain-containing protein 6 (885 aa).

10 ANK repeats span residues 8–37 (PGLQLLLRACEQGDTDTARRLLEPGGEPVA), 68–97 (AGNSALQLAAAGGHEPLVRFLLRRGASVNS), 101–130 (YGWSALMQAARCGHASVAHLLLDHGADVNA), 134–163 (LGASVLTVASRGGHLGVVKLLLEAGATVDH), 181–210 (LGITALMAAVQHGHEAVVRLLMEWGADPNH), 215–244 (VGWSPLMLAALLGKLSVVQQLVEKGANPDH), 282–312 (KRRPDIFHALKMGNFQLVKEIADEDPNHVNL), 316–345 (DGATPLMLAAVTGQLPLVQLLVEKHADMNK), 350–379 (HGWTALMQATYHGNKEIVKYLLNQGADVTL), and 383–414 (NGYTAFDLVMLLNDPDTELVRLLASVCMQVNK). Asn-129 bears the 3-hydroxyasparagine mark. Disordered regions lie at residues 415–439 (DRGGRPSHRPPLPHSKARQPWSIPM), 491–522 (MRAPPQDRTNHLGPPEAAHAAKDSGPGNPRRE), 563–775 (SSDR…ITDE), and 855–885 (FESSASNTRAPGNSPCMAGWVRPEETVSSRR). Over residues 608–640 (PSISRSPTSPASSGNFNHSPHSSGGASGVGSMS) the composition is skewed to low complexity. Ser-650 is modified (phosphoserine). A compositionally biased stretch (polar residues) spans 650–662 (SGGSVDSVLSQIA). 2 stretches are compositionally biased toward low complexity: residues 689 to 713 (GSSPPELPASLLGSGSGSSNVTSSS) and 722 to 739 (PPSGTSATSKSTSPTLTP). Ser-734 and Ser-742 each carry phosphoserine. The span at 750 to 770 (SSVSSSSSHRQSKSSGGSSSG) shows a compositional bias: low complexity. Residues 773–836 (TDEDELTGIL…LAAISELNAG (64 aa)) enclose the SAM domain. Residues 855-865 (FESSASNTRAP) show a composition bias toward polar residues. The span at 876–885 (RPEETVSSRR) shows a compositional bias: basic and acidic residues.

In terms of assembly, homooligomer. Interacts with NEK8. Central component of a complex containing at least ANKS6, INVS, NEK8 and NPHP3. ANKS6 may organize complex assembly by linking INVS and NPHP3 to NEK8 and INVS may target the complex to the proximal ciliary axoneme. Interacts (via SAM domain) with BICC1 (via KH domains) in an RNA-dependent manner. Interacts (via SAM domain) with ANKS3 (via SAM domain). In terms of processing, hydroxylated at Asn-129, most probably by HIF1AN. This hydroxylation results in decreased NEK8-binding. In terms of tissue distribution, widely expressed with moderate level in brain, skeletal muscle and testis. Expressed in renal tubules.

It is found in the cell projection. It localises to the cilium. The protein resides in the cytoplasm. Required for renal function. The sequence is that of Ankyrin repeat and SAM domain-containing protein 6 (Anks6) from Rattus norvegicus (Rat).